A 188-amino-acid chain; its full sequence is Elongation factor P (188 aa).

Lys-34 bears the N6-(3,6-diaminohexanoyl)-5-hydroxylysine mark.

The protein belongs to the elongation factor P family. In terms of processing, may be beta-lysylated on the epsilon-amino group of Lys-34 by the combined action of EpmA and EpmB, and then hydroxylated on the C5 position of the same residue by EpmC (if this protein is present). Lysylation is critical for the stimulatory effect of EF-P on peptide-bond formation. The lysylation moiety may extend toward the peptidyltransferase center and stabilize the terminal 3-CCA end of the tRNA. Hydroxylation of the C5 position on Lys-34 may allow additional potential stabilizing hydrogen-bond interactions with the P-tRNA.

The protein resides in the cytoplasm. Its pathway is protein biosynthesis; polypeptide chain elongation. Functionally, involved in peptide bond synthesis. Alleviates ribosome stalling that occurs when 3 or more consecutive Pro residues or the sequence PPG is present in a protein, possibly by augmenting the peptidyl transferase activity of the ribosome. Modification of Lys-34 is required for alleviation. The chain is Elongation factor P from Coxiella burnetii (strain CbuK_Q154) (Coxiella burnetii (strain Q154)).